The following is a 213-amino-acid chain: Large ribosomal subunit protein uL1 (213 aa).

The protein belongs to the universal ribosomal protein uL1 family. In terms of assembly, part of the 50S ribosomal subunit.

Its function is as follows. Binds directly to 23S rRNA. Probably involved in E site tRNA release. Functionally, protein L1 is also a translational repressor protein, it controls the translation of its operon by binding to its mRNA. The chain is Large ribosomal subunit protein uL1 from Methanocella arvoryzae (strain DSM 22066 / NBRC 105507 / MRE50).